A 236-amino-acid polypeptide reads, in one-letter code: Small ribosomal subunit protein uS2c (236 aa).

Belongs to the universal ribosomal protein uS2 family.

It localises to the plastid. The protein localises to the chloroplast. The chain is Small ribosomal subunit protein uS2c (rps2) from Daucus carota (Wild carrot).